A 186-amino-acid polypeptide reads, in one-letter code: ADP-ribosylation factor-like protein 6 (186 aa).

Gly2 is lipidated: N-myristoyl glycine. Residues 24 to 31 (GLDNSGKT), Thr50, 69 to 73 (DMSGQ), Gly72, 130 to 133 (NKMD), and Ala164 contribute to the GTP site. Position 50 (Thr50) interacts with Mg(2+).

Belongs to the small GTPase superfamily. Arf family. As to quaternary structure, interacts with SEC61B, ARL6IP1, ARL6IP2, ARL6IP3, ARL6IP4 ARL6IP5 and ARL6IP6. Interacts (GTP-bound form) with the BBSome a complex that contains BBS1, BBS2, BBS4, BBS5, BBS7, BBS8/TTC8, BBS9 and BBIP10. Interacts (GTP-free form) with IFT27. In terms of tissue distribution, most abundant in brain and kidney. Expressed in heart and eye. Isoform 2 is expressed only in the retina.

It is found in the cell projection. The protein resides in the cilium membrane. It localises to the cytoplasm. Its subcellular location is the cytoskeleton. The protein localises to the cilium axoneme. It is found in the cilium basal body. Its function is as follows. Involved in membrane protein trafficking at the base of the ciliary organelle. Mediates recruitment onto plasma membrane of the BBSome complex which would constitute a coat complex required for sorting of specific membrane proteins to the primary cilia. Together with BBS1, is necessary for correct trafficking of PKD1 to primary cilia. Together with the BBSome complex and LTZL1, controls SMO ciliary trafficking and contributes to the sonic hedgehog (SHH) pathway regulation. May regulate cilia assembly and disassembly and subsequent ciliary signaling events such as the Wnt signaling cascade. Isoform 2 may be required for proper retinal function and organization. This Mus musculus (Mouse) protein is ADP-ribosylation factor-like protein 6 (Arl6).